A 308-amino-acid chain; its full sequence is tRNA dimethylallyltransferase (308 aa).

Residue 9–16 coordinates ATP; that stretch reads GPTAVGKT. 11–16 lines the substrate pocket; sequence TAVGKT. Residues 34 to 37 are interaction with substrate tRNA; the sequence is DSMQ.

This sequence belongs to the IPP transferase family. In terms of assembly, monomer. Mg(2+) is required as a cofactor.

The enzyme catalyses adenosine(37) in tRNA + dimethylallyl diphosphate = N(6)-dimethylallyladenosine(37) in tRNA + diphosphate. Its function is as follows. Catalyzes the transfer of a dimethylallyl group onto the adenine at position 37 in tRNAs that read codons beginning with uridine, leading to the formation of N6-(dimethylallyl)adenosine (i(6)A). In Lactobacillus delbrueckii subsp. bulgaricus (strain ATCC BAA-365 / Lb-18), this protein is tRNA dimethylallyltransferase.